The sequence spans 585 residues: MNAYVRDSESVYSESYPPENFISNEPEKSKDKDNFNGEEVISYVGEVETVPAKEENVFRRFINGFKIEKNQQDSAGQGLKRRLKSRHIQMIGIGGAIGTGVWVGSSKSLYRGGAASVLIDYCIVGTMVFCTVYALGELAVAFPTRGSFVTHATRFIDESWGFALSWNYVFSFIVTIPLELTTGTMMIKYWTNLNSGIWVTVFIVFLFFINIFGVKGYGEMEFIMSTIKVVAMCGFIILGIIIDCGGVPTDHRGYMGTHIFRENAFRHKFKGFCAVFTSAAFSFSGTEYVGVAAAETENPAKAFPVAVRQTLFRIAIFYILSLFIVSLLISGADPRLTSYHGVDASPFVLAIKDANIKALPSILNAIILISVISSANAQLYAGSRAIHSLGCNGFAPKCFTLVDREGRPLVALLILFLFMFLGYLVETGQYDTVFDWMLSISGLGTLFCWGSICLAHIRYRAAMKHQNRSLKEVGFVSPFNVYASYYAFILVCLVLAAEFYVSIFPVGGKPDASAFFENYLSAPVILVFFICHKLYYKTKRITLSNMDLETDFAYKTPVEEEEEEEKSAGSLSIKQRMKKLSDMMC.

A disordered region spans residues Met-1 to Asn-34. Topologically, residues Met-1–Gln-89 are cytoplasmic. Over residues Ser-10–Glu-19 the composition is skewed to low complexity. Residues Glu-25–Asn-34 show a composition bias toward basic and acidic residues. Residues Met-90–Tyr-110 form a helical membrane-spanning segment. At Arg-111–Tyr-121 the chain is on the extracellular side. Residues Cys-122–Phe-142 traverse the membrane as a helical segment. Residues Pro-143 to Ser-159 lie on the Cytoplasmic side of the membrane. The helical transmembrane segment at Trp-160–Leu-180 threads the bilayer. The Extracellular portion of the chain corresponds to Thr-181–Leu-193. The chain crosses the membrane as a helical span at residues Asn-194–Val-214. Residues Lys-215–Glu-221 lie on the Cytoplasmic side of the membrane. The helical transmembrane segment at Phe-222–Ile-242 threads the bilayer. Over Asp-243 to Gly-271 the chain is Extracellular. The helical transmembrane segment at Phe-272–Ala-292 threads the bilayer. The Cytoplasmic segment spans residues Ala-293–Arg-313. Residues Ile-314–Pro-334 traverse the membrane as a helical segment. Topologically, residues Arg-335–Ser-361 are extracellular. The chain crosses the membrane as a helical span at residues Ile-362 to Gly-382. The Cytoplasmic portion of the chain corresponds to Ser-383–Arg-407. The chain crosses the membrane as a helical span at residues Pro-408–Gly-428. Over Gln-429–Trp-436 the chain is Extracellular. A helical membrane pass occupies residues Met-437–Ile-457. Residues Arg-458–Tyr-486 lie on the Cytoplasmic side of the membrane. Residues Ala-487–Gly-507 traverse the membrane as a helical segment. At Gly-508 to Asp-511 the chain is on the extracellular side. A helical transmembrane segment spans residues Ala-512–His-532. The Cytoplasmic portion of the chain corresponds to Lys-533–Cys-585.

The protein belongs to the amino acid-polyamine-organocation (APC) superfamily.

Its subcellular location is the endoplasmic reticulum. The protein localises to the membrane. This is an uncharacterized protein from Schizosaccharomyces pombe (strain 972 / ATCC 24843) (Fission yeast).